The primary structure comprises 239 residues: Serine protease SplC (239 aa).

The first 36 residues, 1-36 (MNKNIVIKSMAALAILTSVTGINAAVVEETQQIANA), serve as a signal peptide directing secretion. Catalysis depends on charge relay system residues His-75, Asp-113, and Ser-193.

It belongs to the peptidase S1B family.

The protein resides in the secreted. This Staphylococcus aureus (strain MW2) protein is Serine protease SplC (splC).